The primary structure comprises 142 residues: 3-hydroxyacyl-[acyl-carrier-protein] dehydratase FabZ (142 aa).

Histidine 50 is a catalytic residue.

The protein belongs to the thioester dehydratase family. FabZ subfamily.

It is found in the cytoplasm. It carries out the reaction a (3R)-hydroxyacyl-[ACP] = a (2E)-enoyl-[ACP] + H2O. Involved in unsaturated fatty acids biosynthesis. Catalyzes the dehydration of short chain beta-hydroxyacyl-ACPs and long chain saturated and unsaturated beta-hydroxyacyl-ACPs. The chain is 3-hydroxyacyl-[acyl-carrier-protein] dehydratase FabZ from Clostridium tetani (strain Massachusetts / E88).